A 358-amino-acid chain; its full sequence is Peptide chain release factor 2 (358 aa).

An N5-methylglutamine modification is found at Gln242.

This sequence belongs to the prokaryotic/mitochondrial release factor family. In terms of processing, methylated by PrmC. Methylation increases the termination efficiency of RF2.

It localises to the cytoplasm. Peptide chain release factor 2 directs the termination of translation in response to the peptide chain termination codons UGA and UAA. In Borreliella burgdorferi (strain ATCC 35210 / DSM 4680 / CIP 102532 / B31) (Borrelia burgdorferi), this protein is Peptide chain release factor 2 (prfB).